A 318-amino-acid chain; its full sequence is MTLQYYTLNNGRKIPAIGMGCWKLENAADMVYAAIKEGYRLFDCACDYGNEKEVGEGINRAIKDGLVKRKDLFITSKLWNNFHAKENVKKALMKSLSDFNLDYFDLYLMHFPISFKFVPFEEKYPPGFYCGDGDKFIYEDVPIIETWRAMENLVDEGLVKSIGVSNVSGGLLEDLIKAARIKPASLQIEHHPYLQQNKLVEYAQLKGIVVTGYSNFGPLSFLELGNETAKKTQPLYENKTITTIAAKHGKTPFQVLLRWVNQRGIAIIPKSTFPNTLAVNLHVDEFDLTKEDFEEIAKLDRHLRFNDPWTWDKIPTFV.

Tyr-48 serves as the catalytic Proton donor. His-110 is a substrate binding site. Residues 165-166, 214-223, and 270-280 each bind NAD(+); these read SN, SNFGPLSFLE, and KSTFPNTLAVN.

This sequence belongs to the aldo/keto reductase family.

The catalysed reaction is xylitol + NAD(+) = D-xylose + NADH + H(+). It carries out the reaction xylitol + NADP(+) = D-xylose + NADPH + H(+). The protein operates within carbohydrate metabolism; D-xylose degradation. Its function is as follows. Reduces D-xylose into xylitol. Has a preference for NADPH, but can also utilize NADH as cosubstrate. This chain is NAD(P)H-dependent D-xylose reductase (XYL1), found in Pachysolen tannophilus (Yeast).